The sequence spans 351 residues: Protein RecA (351 aa).

Position 73–80 (73–80 (GPESSGKT)) interacts with ATP.

Belongs to the RecA family.

The protein resides in the cytoplasm. Its function is as follows. Can catalyze the hydrolysis of ATP in the presence of single-stranded DNA, the ATP-dependent uptake of single-stranded DNA by duplex DNA, and the ATP-dependent hybridization of homologous single-stranded DNAs. It interacts with LexA causing its activation and leading to its autocatalytic cleavage. The sequence is that of Protein RecA from Oleidesulfovibrio alaskensis (strain ATCC BAA-1058 / DSM 17464 / G20) (Desulfovibrio alaskensis).